The following is a 296-amino-acid chain: Nucleotide-binding protein Pnuc_1915 (296 aa).

Position 8-15 (8-15 (GISGSGKS)) interacts with ATP. 57 to 60 (DARR) contacts GTP.

Belongs to the RapZ-like family.

Functionally, displays ATPase and GTPase activities. The chain is Nucleotide-binding protein Pnuc_1915 from Polynucleobacter asymbioticus (strain DSM 18221 / CIP 109841 / QLW-P1DMWA-1) (Polynucleobacter necessarius subsp. asymbioticus).